The chain runs to 810 residues: Hemoglobin-haptoglobin utilization protein B (810 aa).

Residues 1-22 form the signal peptide; it reads MPIPFKPVLAAAAIAQAFPAFA. The TBDR plug domain occupies 34–166; sequence NEITVTGTHK…LGGAVNYQTK (133 aa). The 636-residue stretch at 175 to 810 folds into the TBDR beta-barrel domain; the sequence is DKPYHLGIKG…SYNFTIEAKF (636 aa). The TonB C-terminal box signature appears at 793–810; sequence QRFTSPGRSYNFTIEAKF.

The protein belongs to the TonB-dependent receptor family.

It localises to the cell outer membrane. Acts as a receptor for hemoglobin or the hemoglobin/haptoglobin complex and is required for heme uptake. The protein is Hemoglobin-haptoglobin utilization protein B (hpuB) of Neisseria meningitidis serogroup A / serotype 4A (strain DSM 15465 / Z2491).